The primary structure comprises 397 residues: Carbamoyl phosphate synthase small chain (397 aa).

Residues 1 to 204 (MKHVLRKEKT…NAKLKEKIWH (204 aa)) form a CPSase region. Positions 57, 252, and 254 each coordinate L-glutamine. The region spanning 204–391 (HVVVYDFGVK…IKLMKKSYNS (188 aa)) is the Glutamine amidotransferase type-1 domain. The active-site Nucleophile is the C280. 4 residues coordinate L-glutamine: L281, Q284, N322, and Y325. Catalysis depends on residues H364 and E366.

The protein belongs to the CarA family. As to quaternary structure, composed of two chains; the small (or glutamine) chain promotes the hydrolysis of glutamine to ammonia, which is used by the large (or ammonia) chain to synthesize carbamoyl phosphate. Tetramer of heterodimers (alpha,beta)4.

It catalyses the reaction hydrogencarbonate + L-glutamine + 2 ATP + H2O = carbamoyl phosphate + L-glutamate + 2 ADP + phosphate + 2 H(+). The catalysed reaction is L-glutamine + H2O = L-glutamate + NH4(+). It functions in the pathway amino-acid biosynthesis; L-arginine biosynthesis; carbamoyl phosphate from bicarbonate: step 1/1. The protein operates within pyrimidine metabolism; UMP biosynthesis via de novo pathway; (S)-dihydroorotate from bicarbonate: step 1/3. Small subunit of the glutamine-dependent carbamoyl phosphate synthetase (CPSase). CPSase catalyzes the formation of carbamoyl phosphate from the ammonia moiety of glutamine, carbonate, and phosphate donated by ATP, constituting the first step of 2 biosynthetic pathways, one leading to arginine and/or urea and the other to pyrimidine nucleotides. The small subunit (glutamine amidotransferase) binds and cleaves glutamine to supply the large subunit with the substrate ammonia. The sequence is that of Carbamoyl phosphate synthase small chain from Buchnera aphidicola subsp. Baizongia pistaciae (strain Bp).